Consider the following 276-residue polypeptide: NH(3)-dependent NAD(+) synthetase (276 aa).

46-53 (GISGGQDS) contributes to the ATP binding site. Aspartate 52 contributes to the Mg(2+) binding site. Arginine 140 contacts deamido-NAD(+). Threonine 160 provides a ligand contact to ATP. Glutamate 165 lines the Mg(2+) pocket. Residues lysine 173 and aspartate 180 each contribute to the deamido-NAD(+) site. ATP-binding residues include lysine 189 and threonine 211. 260-261 (HK) serves as a coordination point for deamido-NAD(+).

It belongs to the NAD synthetase family. Homodimer.

The catalysed reaction is deamido-NAD(+) + NH4(+) + ATP = AMP + diphosphate + NAD(+) + H(+). The protein operates within cofactor biosynthesis; NAD(+) biosynthesis; NAD(+) from deamido-NAD(+) (ammonia route): step 1/1. In terms of biological role, catalyzes the ATP-dependent amidation of deamido-NAD to form NAD. Uses ammonia as a nitrogen source. In Citrobacter koseri (strain ATCC BAA-895 / CDC 4225-83 / SGSC4696), this protein is NH(3)-dependent NAD(+) synthetase.